The primary structure comprises 347 residues: Probable E3 ubiquitin-protein ligase DTX3 (347 aa).

The segment at 113-157 is disordered; the sequence is EHPEMHRAGPPPLRAAPLLPPGARGLPPPPPPLPPPLPPRLREEA. Residues 121 to 151 are compositionally biased toward pro residues; it reads GPPPLRAAPLLPPGARGLPPPPPPLPPPLPP. The segment at 164 to 205 adopts an RING-type zinc-finger fold; that stretch reads CPICLGEIQNAKTLEKCRHSFCEGCITRALQVKKACPMCGRF.

The protein belongs to the Deltex family. Homodimer. May form a heterodimers with other members of the Deltex family. Interacts with NOTCH1.

Its subcellular location is the cytoplasm. The enzyme catalyses S-ubiquitinyl-[E2 ubiquitin-conjugating enzyme]-L-cysteine + [acceptor protein]-L-lysine = [E2 ubiquitin-conjugating enzyme]-L-cysteine + N(6)-ubiquitinyl-[acceptor protein]-L-lysine.. Its pathway is protein modification; protein ubiquitination. In terms of biological role, regulator of Notch signaling, a signaling pathway involved in cell-cell communications that regulates a broad spectrum of cell-fate determinations. Probably acts both as a positive and negative regulator of Notch, depending on the developmental and cell context. Functions as an ubiquitin ligase protein in vitro, suggesting that it may regulate the Notch pathway via some ubiquitin ligase activity. The chain is Probable E3 ubiquitin-protein ligase DTX3 (DTX3) from Homo sapiens (Human).